The following is a 205-amino-acid chain: Beta-crystallin B2 (205 aa).

N-acetylalanine is present on alanine 2. The N-terminal arm stretch occupies residues 2-16 (ASDHQTQAGKPQSLN). Beta/gamma crystallin 'Greek key' domains follow at residues 17-56 (PKII…LVQA) and 57-101 (GPWV…RPIK). The segment at 102–106 (VDSQE) is connecting peptide. 2 consecutive Beta/gamma crystallin 'Greek key' domains span residues 107–148 (HKII…RVQS) and 149–191 (GTWV…RRIR). The segment at 193 to 205 (MQWHQRGAFHPSN) is C-terminal arm.

This sequence belongs to the beta/gamma-crystallin family. Homo/heterodimer, or complexes of higher-order. The structure of beta-crystallin oligomers seems to be stabilized through interactions between the N-terminal arms.

In terms of biological role, crystallins are the dominant structural components of the vertebrate eye lens. In Homo sapiens (Human), this protein is Beta-crystallin B2 (CRYBB2).